Reading from the N-terminus, the 397-residue chain is CCA-adding enzyme (397 aa).

Glycine 26 and arginine 29 together coordinate ATP. 2 residues coordinate CTP: glycine 26 and arginine 29. Positions 39 and 41 each coordinate Mg(2+). 5 residues coordinate ATP: arginine 110, aspartate 153, arginine 156, arginine 159, and arginine 162. CTP contacts are provided by arginine 110, aspartate 153, arginine 156, arginine 159, and arginine 162.

Belongs to the tRNA nucleotidyltransferase/poly(A) polymerase family. Bacterial CCA-adding enzyme type 3 subfamily. In terms of assembly, homodimer. The cofactor is Mg(2+).

The catalysed reaction is a tRNA precursor + 2 CTP + ATP = a tRNA with a 3' CCA end + 3 diphosphate. It catalyses the reaction a tRNA with a 3' CCA end + 2 CTP + ATP = a tRNA with a 3' CCACCA end + 3 diphosphate. Its function is as follows. Catalyzes the addition and repair of the essential 3'-terminal CCA sequence in tRNAs without using a nucleic acid template. Adds these three nucleotides in the order of C, C, and A to the tRNA nucleotide-73, using CTP and ATP as substrates and producing inorganic pyrophosphate. tRNA 3'-terminal CCA addition is required both for tRNA processing and repair. Also involved in tRNA surveillance by mediating tandem CCA addition to generate a CCACCA at the 3' terminus of unstable tRNAs. While stable tRNAs receive only 3'-terminal CCA, unstable tRNAs are marked with CCACCA and rapidly degraded. In Bacillus cereus (strain AH187), this protein is CCA-adding enzyme.